The chain runs to 205 residues: CASP-like protein 2A1 (205 aa).

Residues 1–25 are disordered; that stretch reads MDKSKVSTAVGGETPVGLITGSRDD. Over 1-34 the chain is Cytoplasmic; the sequence is MDKSKVSTAVGGETPVGLITGSRDDELESGSMRT. The helical transmembrane segment at 35-55 threads the bilayer; that stretch reads AETVLRLVPMAFCISALVLML. Residues 56–76 lie on the Extracellular side of the membrane; sequence KNSQTNDFGTLSYSDLGAFRY. A helical transmembrane segment spans residues 77-97; sequence LVHANGICAGYSLLSAIIVAM. Over 98 to 105 the chain is Cytoplasmic; sequence PRPSTMSR. A helical membrane pass occupies residues 106–126; that stretch reads AWTFFFLDQVLTYVILAAAAV. Over 127–156 the chain is Extracellular; that stretch reads SVEALYLARKGDIAITWSAACVSFGGFCHK. Residues 157 to 177 form a helical membrane-spanning segment; it reads AITSAVITFIVVVCYALLSLV. The Cytoplasmic segment spans residues 178–205; sequence SSYKLFSRYGAPDVSYPGKGIEVAAFHS.

The protein belongs to the Casparian strip membrane proteins (CASP) family. In terms of assembly, homodimer and heterodimers.

The protein localises to the cell membrane. This chain is CASP-like protein 2A1, found in Ricinus communis (Castor bean).